We begin with the raw amino-acid sequence, 125 residues long: Glycine cleavage system H protein (125 aa).

Residues V23–K104 form the Lipoyl-binding domain. K64 carries the post-translational modification N6-lipoyllysine.

This sequence belongs to the GcvH family. The glycine cleavage system is composed of four proteins: P, T, L and H. (R)-lipoate is required as a cofactor.

Functionally, the glycine cleavage system catalyzes the degradation of glycine. The H protein shuttles the methylamine group of glycine from the P protein to the T protein. The chain is Glycine cleavage system H protein from Clostridioides difficile (strain 630) (Peptoclostridium difficile).